The sequence spans 302 residues: 33 kDa chaperonin (302 aa).

2 disulfides stabilise this stretch: Cys234/Cys236 and Cys267/Cys270.

It belongs to the HSP33 family. In terms of processing, under oxidizing conditions two disulfide bonds are formed involving the reactive cysteines. Under reducing conditions zinc is bound to the reactive cysteines and the protein is inactive.

It localises to the cytoplasm. In terms of biological role, redox regulated molecular chaperone. Protects both thermally unfolding and oxidatively damaged proteins from irreversible aggregation. Plays an important role in the bacterial defense system toward oxidative stress. In Neisseria gonorrhoeae (strain NCCP11945), this protein is 33 kDa chaperonin.